We begin with the raw amino-acid sequence, 180 residues long: Pro-glucagon (180 aa).

Positions 1–20 (MKSIYFVAGLFVMLVQGSWQ) are cleaved as a signal peptide. Residues 26–59 (TEEKSRSFSASQADPLSDPDQMNEDKRHSQGTFT) are disordered. Residue serine 54 is modified to Phosphoserine. Residues 84-89 (NRNNIA) constitute a propeptide that is removed on maturation. Serine 105 and serine 108 each carry phosphoserine. Arginine 127 carries the post-translational modification Arginine amide. The propeptide occupies 131-145 (DFPEEVAIVEELGRR). 2 positions are modified to phosphoserine: serine 150 and serine 152.

The protein belongs to the glucagon family. In terms of processing, proglucagon is post-translationally processed in a tissue-specific manner in pancreatic A cells and intestinal L cells. In pancreatic A cells, the major bioactive hormone is glucagon cleaved by PCSK2/PC2. In the intestinal L cells PCSK1/PC1 liberates GLP-1, GLP-2, glicentin and oxyntomodulin. GLP-1 is further N-terminally truncated by post-translational processing in the intestinal L cells resulting in GLP-1(7-37) GLP-1-(7-36)amide. The C-terminal amidation is neither important for the metabolism of GLP-1 nor for its effects on the endocrine pancreas. In terms of tissue distribution, secreted in the A cells of the islets of Langerhans. Secreted in the A cells of the islets of Langerhans. Secreted from enteroendocrine L cells throughout the gastrointestinal tract. Also secreted in selected neurons in the brain. As to expression, secreted from enteroendocrine cells throughout the gastrointestinal tract. Also secreted in selected neurons in the brain. In terms of tissue distribution, secreted from enteroendocrine cells throughout the gastrointestinal tract.

It localises to the secreted. In terms of biological role, plays a key role in glucose metabolism and homeostasis. Regulates blood glucose by increasing gluconeogenesis and decreasing glycolysis. A counterregulatory hormone of insulin, raises plasma glucose levels in response to insulin-induced hypoglycemia. Plays an important role in initiating and maintaining hyperglycemic conditions in diabetes. Potent stimulator of glucose-dependent insulin release. Also stimulates insulin release in response to IL6. Plays important roles on gastric motility and the suppression of plasma glucagon levels. May be involved in the suppression of satiety and stimulation of glucose disposal in peripheral tissues, independent of the actions of insulin. Has growth-promoting activities on intestinal epithelium. May also regulate the hypothalamic pituitary axis (HPA) via effects on LH, TSH, CRH, oxytocin, and vasopressin secretion. Increases islet mass through stimulation of islet neogenesis and pancreatic beta cell proliferation. Inhibits beta cell apoptosis. Its function is as follows. Stimulates intestinal growth and up-regulates villus height in the small intestine, concomitant with increased crypt cell proliferation and decreased enterocyte apoptosis. The gastrointestinal tract, from the stomach to the colon is the principal target for GLP-2 action. Plays a key role in nutrient homeostasis, enhancing nutrient assimilation through enhanced gastrointestinal function, as well as increasing nutrient disposal. Stimulates intestinal glucose transport and decreases mucosal permeability. Functionally, significantly reduces food intake. Inhibits gastric emptying in humans. Suppression of gastric emptying may lead to increased gastric distension, which may contribute to satiety by causing a sensation of fullness. In terms of biological role, may modulate gastric acid secretion and the gastro-pyloro-duodenal activity. May play an important role in intestinal mucosal growth in the early period of life. This Homo sapiens (Human) protein is Pro-glucagon.